The chain runs to 620 residues: 1-deoxy-D-xylulose-5-phosphate synthase (620 aa).

Thiamine diphosphate-binding positions include His-80 and 121–123 (GHS). Asp-152 serves as a coordination point for Mg(2+). Thiamine diphosphate-binding positions include 153–154 (GA), Asn-181, Tyr-288, and Glu-370. Asn-181 lines the Mg(2+) pocket.

This sequence belongs to the transketolase family. DXPS subfamily. As to quaternary structure, homodimer. Requires Mg(2+) as cofactor. It depends on thiamine diphosphate as a cofactor.

The catalysed reaction is D-glyceraldehyde 3-phosphate + pyruvate + H(+) = 1-deoxy-D-xylulose 5-phosphate + CO2. The protein operates within metabolic intermediate biosynthesis; 1-deoxy-D-xylulose 5-phosphate biosynthesis; 1-deoxy-D-xylulose 5-phosphate from D-glyceraldehyde 3-phosphate and pyruvate: step 1/1. In terms of biological role, catalyzes the acyloin condensation reaction between C atoms 2 and 3 of pyruvate and glyceraldehyde 3-phosphate to yield 1-deoxy-D-xylulose-5-phosphate (DXP). This chain is 1-deoxy-D-xylulose-5-phosphate synthase, found in Sodalis glossinidius (strain morsitans).